The following is a 373-amino-acid chain: Glycerol-3-phosphate dehydrogenase [NAD(+)] 2 (373 aa).

At Ser-15 the chain carries Phosphoserine. NAD(+)-binding positions include 31–36, Phe-123, Lys-146, and Ala-179; that span reads GSGNWG. Lys-146 serves as a coordination point for substrate. Lys-236 acts as the Proton acceptor in catalysis. Positions 300 and 329 each coordinate NAD(+). Residue 300–301 coordinates substrate; it reads RN.

It belongs to the NAD-dependent glycerol-3-phosphate dehydrogenase family.

The protein localises to the cytoplasm. It catalyses the reaction sn-glycerol 3-phosphate + NAD(+) = dihydroxyacetone phosphate + NADH + H(+). This chain is Glycerol-3-phosphate dehydrogenase [NAD(+)] 2 (gpd2), found in Schizosaccharomyces pombe (strain 972 / ATCC 24843) (Fission yeast).